Reading from the N-terminus, the 631-residue chain is Nucleoside triphosphatase I (631 aa).

Residues 42 to 204 (FLGLDSMHSL…TMLVNLLRPG (163 aa)) form the Helicase ATP-binding domain. 55-62 (HETGVGKT) is a binding site for ATP. Residues 141–144 (DECH) carry the DEXH box motif. The region spanning 367–532 (KFIDVCLGIL…EFVQLFRVFK (166 aa)) is the Helicase C-terminal domain.

It belongs to the helicase family. NPH I subfamily. As to quaternary structure, monomer.

It carries out the reaction a ribonucleoside 5'-triphosphate + H2O = a ribonucleoside 5'-diphosphate + phosphate + H(+). In terms of biological role, serves two roles in transcription; it acts in concert with viral termination factor/capping enzyme to catalyze release of UUUUUNU-containing nascent RNA from the elongation complex, and it acts by itself as a polymerase elongation factor to facilitate readthrough of intrinsic pause sites. The polypeptide is Nucleoside triphosphatase I (NPH1) (Homo sapiens (Human)).